A 417-amino-acid chain; its full sequence is Cobalamin binding intrinsic factor (417 aa).

A signal peptide spans 1-18 (MAWLSFYLLNVLWAVAGT). 3 disulfides stabilise this stretch: cysteine 26-cysteine 246, cysteine 103-cysteine 288, and cysteine 143-cysteine 182. Aspartate 171 is a binding site for cob(II)alamin. Serine 191 bears the Phosphoserine mark. Asparagine 209 carries N-linked (GlcNAc...) asparagine glycosylation. 2 residues coordinate cob(II)alamin: aspartate 222 and glutamine 270. N-linked (GlcNAc...) asparagine glycans are attached at residues asparagine 311 and asparagine 330. Cob(II)alamin contacts are provided by residues 365–370 (SWGLIV) and 386–395 (WEFLSGKTPL). The N-linked (GlcNAc...) asparagine glycan is linked to asparagine 413.

The protein belongs to the eukaryotic cobalamin transport proteins family. As to quaternary structure, interacts with CUBN (via CUB domains). Post-translationally, the N-terminus is blocked. As to expression, gastric mucosa.

The protein resides in the secreted. Promotes absorption of the essential vitamin cobalamin (Cbl) in the ileum. After interaction with CUBN, the CBLIF-cobalamin complex is internalized via receptor-mediated endocytosis. The sequence is that of Cobalamin binding intrinsic factor from Rattus norvegicus (Rat).